We begin with the raw amino-acid sequence, 522 residues long: Peptide chain release factor 3 (522 aa).

The tr-type G domain maps to 10-277; that stretch reads ASRKTFAIIS…TFVDFAPSPS (268 aa). GTP is bound by residues 19–26, 87–91, and 141–144; these read SHPDAGKT, DTPGH, and NKMD.

The protein belongs to the TRAFAC class translation factor GTPase superfamily. Classic translation factor GTPase family. PrfC subfamily.

The protein resides in the cytoplasm. Functionally, increases the formation of ribosomal termination complexes and stimulates activities of RF-1 and RF-2. It binds guanine nucleotides and has strong preference for UGA stop codons. It may interact directly with the ribosome. The stimulation of RF-1 and RF-2 is significantly reduced by GTP and GDP, but not by GMP. The polypeptide is Peptide chain release factor 3 (Listeria monocytogenes serotype 4b (strain F2365)).